The following is a 64-amino-acid chain: Antimicrobial peptide 1 (64 aa).

The N-terminal stretch at 1 to 26 is a signal peptide; it reads MAKVSSSLLKFAIVLILVLSMSAIIS. Intrachain disulfides connect cysteine 29-cysteine 46, cysteine 36-cysteine 50, and cysteine 45-cysteine 61.

Belongs to the AMP family.

It localises to the secreted. Functionally, possesses antifungal and antibacterial activity. In Mesembryanthemum crystallinum (Common ice plant), this protein is Antimicrobial peptide 1.